The chain runs to 2313 residues: Voltage-dependent R-type calcium channel subunit alpha-1E (2313 aa).

Residues 1–38 (MARFGEAVVARPGSGDGDSDQSRNRQGTPVPASGQAAA) are disordered. The Cytoplasmic segment spans residues 1–89 (MARFGEAVVA…KYAKKLIDWP (89 aa)). Phosphoserine is present on residues serine 14 and serine 19. The I repeat unit spans residues 76 to 354 (NIVRKYAKKL…LVLGVLSGEF (279 aa)). The helical transmembrane segment at 90 to 108 (PFEYMILATIIANCIVLAL) threads the bilayer. The Extracellular portion of the chain corresponds to 109–127 (EQHLPEDDKTPMSRRLEKT). A helical transmembrane segment spans residues 128-146 (EPYFIGIFCFEAGIKIVAL). Residues 147–158 (GFIFHKGSYLRN) are Cytoplasmic-facing. Residues 159-173 (GWNVMDFIVVLSGIL) traverse the membrane as a helical segment. Residues 174–185 (ATAGTHFNTHVD) lie on the Extracellular side of the membrane. Residues 186-205 (LRTLRAVRVLRPLKLVSGIP) form a helical membrane-spanning segment. Over 206–223 (SLQIVLKSIMKAMVPLLQ) the chain is Cytoplasmic. A helical membrane pass occupies residues 224–244 (IGLLLFFAILMFAIIGLEFYS). Residues 245–326 (GKLHRACFMN…NTNDALGATW (82 aa)) are Extracellular-facing. Residue asparagine 254 is glycosylated (N-linked (GlcNAc...) asparagine). The chain crosses the membrane as a helical span at residues 327-350 (NWLYFIPLIIIGSFFVLNLVLGVL). Topologically, residues 351-476 (SGEFAKERER…ISIRHMVKSQ (126 aa)) are cytoplasmic. The segment at 374 to 391 (QQIERELNGYRAWIDKAE) is binding to the beta subunit. Aspartate 426 is a binding site for Ca(2+). Serine 427 bears the Phosphoserine mark. Ca(2+)-binding residues include serine 428, glutamate 430, and cysteine 432. Threonine 440 is subject to Phosphothreonine. One copy of the II repeat lies at 462–706 (ERLLRISIRH…VFLAIAVDNL (245 aa)). A helical transmembrane segment spans residues 477–496 (VFYWIVLSLVALNTACVAIV). The Extracellular portion of the chain corresponds to 497–509 (HHNQPQWLTHLLY). A helical transmembrane segment spans residues 510 to 529 (YAEFLFLGLFLLEMSLKMYG). At 530 to 538 (MGPRLYFHS) the chain is on the cytoplasmic side. The chain crosses the membrane as a helical span at residues 539 to 557 (SFNCFDFGVTVGSIFEVVW). Over 558–567 (AIFRPGTSFG) the chain is Extracellular. A helical transmembrane segment spans residues 568–586 (ISVLRALRLLRIFKITKYW). At 587–605 (ASLRNLVVSLMSSMKSIIS) the chain is on the cytoplasmic side. A helical transmembrane segment spans residues 606–625 (LLFLLFLFIVVFALLGMQLF). The Extracellular segment spans residues 626–678 (GGRFNFNDGTPSANFDTFPAAIMTVFQILTGEDWNEVMYNGIRSQGGVSSGMW). The chain crosses the membrane as a helical span at residues 679–703 (SAIYFIVLTLFGNYTLLNVFLAIAV). Topologically, residues 704–1148 (DNLANAQELT…TNPIRRACHY (445 aa)) are cytoplasmic. The tract at residues 729–774 (LQKAKEVSPMSAPNMPSIERDRRRRHHMSMWEPRSSHLRERRRRHH) is disordered. 5 positions are modified to phosphoserine: serine 736, serine 745, serine 793, serine 815, and serine 855. A disordered region spans residues 851–984 (SRGGSLKGDG…EERAQDLRRT (134 aa)). Positions 866-875 (ALDNQRTPLS) are enriched in polar residues. The segment covering 913 to 926 (RHRQSQRRSRHRRV) has biased composition (basic residues). The span at 933–945 (SSSASRSRSASQE) shows a compositional bias: low complexity. Serine 947 is modified (phosphoserine). Over residues 955–983 (EGEKDHELRGNHGAKEPTIQEERAQDLRR) the composition is skewed to basic and acidic residues. Serine 1097 is subject to Phosphoserine. Residues 1103-1125 (EIREDEEEVEKKKQKKEKRETGK) form a disordered region. An III repeat occupies 1140 to 1426 (NPIRRACHYI…IFVALIIITF (287 aa)). The chain crosses the membrane as a helical span at residues 1149–1165 (IVNLRYFEMCILLVIAA). The Extracellular segment spans residues 1166 to 1189 (SSIALAAEDPVLTNSERNKVLRYF). A helical transmembrane segment spans residues 1190 to 1209 (DYVFTGVFTFEMVIKMIDQG). At 1210–1217 (LILQDGSY) the chain is on the cytoplasmic side. Residues 1218 to 1240 (FRDLWNILDFVVVVGALVAFALA) traverse the membrane as a helical segment. Residues 1241 to 1254 (NALGTNKGRDIKTI) are Extracellular-facing. Residues 1255 to 1272 (KSLRVLRVLRPLKTIKRL) traverse the membrane as a helical segment. Residues 1273–1291 (PKLKAVFDCVVTSLKNVFN) lie on the Cytoplasmic side of the membrane. The chain crosses the membrane as a helical span at residues 1292 to 1311 (ILIVYKLFMFIFAVIAVQLF). Residues 1312–1398 (KGKFFYCTDS…RGPSRSNRME (87 aa)) are Extracellular-facing. Residues 1399 to 1422 (MSIFYVVYFVVFPFFFVNIFVALI) form a helical membrane-spanning segment. Residues 1423–1479 (IITFQEQGDKMMEECSLEKNERACIDFAISAKPLTRYMPQNRHTFQYRVWHFVVSPS) lie on the Cytoplasmic side of the membrane. An IV repeat occupies 1463–1726 (NRHTFQYRVW…LFVAVIMDNF (264 aa)). A helical transmembrane segment spans residues 1480 to 1498 (FEYTIMAMIALNTVVLMMK). Over 1499 to 1513 (YYSAPCTYELALKYL) the chain is Extracellular. A helical membrane pass occupies residues 1514–1533 (NIAFTMVFSLECVLKVIAFG). Residues 1534-1541 (FLNYFRDT) lie on the Cytoplasmic side of the membrane. The chain crosses the membrane as a helical span at residues 1542–1560 (WNIFDFITVIGSITEIILT). Topologically, residues 1561–1571 (DSKLVNTSGFN) are extracellular. N-linked (GlcNAc...) asparagine glycans are attached at residues asparagine 1566 and asparagine 1571. The helical transmembrane segment at 1572 to 1590 (MSFLKLFRAARLIKLLRQG) threads the bilayer. The Cytoplasmic portion of the chain corresponds to 1591–1609 (YTIRILLWTFVQSFKALPY). A helical membrane pass occupies residues 1610–1629 (VCLLIAMLFFIYAIIGMQVF). At 1630-1698 (GNIKLDEESH…NENERCGTDL (69 aa)) the chain is on the extracellular side. Residues 1699–1724 (AYVYFVSFIFFCSFLMLNLFVAVIMD) traverse the membrane as a helical segment. Residues 1725–2313 (NFEYLTRDSS…LSDTEEDDKC (589 aa)) lie on the Cytoplasmic side of the membrane. Residues 1739 to 1774 (HHLDEFVRVWAEYDRAACGRIHYTEMYEMLTLMSPP) enclose the EF-hand domain. Ca(2+)-binding residues include aspartate 1752, arginine 1758, and glutamate 1763. Disordered regions lie at residues 1970–2170 (VSEL…RPLL), 2206–2225 (CLTE…ASPQ), and 2263–2295 (SNTI…GPGM). The segment covering 2012–2023 (TDPSSMRRSFST) has biased composition (polar residues). Residues 2055-2064 (HSSLRLSAHR) are compositionally biased toward low complexity. Residues 2065 to 2085 (LNSDSGHKSDTHRSGGRERGR) show a composition bias toward basic and acidic residues. Phosphoserine occurs at positions 2094 and 2113. The span at 2101–2118 (NSEERGTQADWESPERRQ) shows a compositional bias: basic and acidic residues. Over residues 2129–2152 (TPNRQGTGSLSESSIPSVSDTSTP) the composition is skewed to polar residues. Positions 2210 to 2225 (SSNSPHPQQSQHASPQ) are enriched in low complexity.

It belongs to the calcium channel alpha-1 subunit (TC 1.A.1.11) family. CACNA1E subfamily. As to quaternary structure, interacts with EFHC1. Voltage-dependent calcium channels are multisubunit complexes, consisting of alpha-1, alpha-2, beta and delta subunits in a 1:1:1:1 ratio. The channel activity is directed by the pore-forming and voltage-sensitive alpha-1 subunit. In many cases, this subunit is sufficient to generate voltage-sensitive calcium channel activity. The auxiliary subunits beta and alpha-2/delta linked by a disulfide bridge regulate the channel activity. As to expression, expressed in neuronal tissues and in kidney.

The protein localises to the membrane. It carries out the reaction Ca(2+)(in) = Ca(2+)(out). Voltage-sensitive calcium channels (VSCC) mediate the entry of calcium ions into excitable cells. They are also involved in a variety of calcium-dependent processes, including muscle contraction, hormone or neurotransmitter release, gene expression, cell motility, cell division and cell death. The isoform alpha-1E gives rise to R-type calcium currents. R-type calcium channels belong to the 'high-voltage activated' (HVA) group and are blocked by nickel. They are however insensitive to dihydropyridines (DHP). Calcium channels containing alpha-1E subunit could be involved in the modulation of firing patterns of neurons which is important for information processing. Its function is as follows. Voltage-sensitive calcium channels (VSCC) mediate the entry of calcium ions into excitable cells. They are also involved in a variety of calcium-dependent processes, including muscle contraction, hormone or neurotransmitter release, gene expression, cell motility, cell division and cell death. The isoform alpha-1E gives rise to R-type calcium currents. The protein is Voltage-dependent R-type calcium channel subunit alpha-1E (CACNA1E) of Homo sapiens (Human).